We begin with the raw amino-acid sequence, 350 residues long: Sperm equatorial segment protein 1 (350 aa).

An N-terminal signal peptide occupies residues methionine 1–alanine 19. N-linked (GlcNAc...) asparagine glycosylation occurs at asparagine 128.

Belongs to the SPESP1 family. In terms of processing, glycosylated. In testis there are two predominant forms of 77- and 67-kDa and a form of 47-kDa, whereas in epididymal sperm from caput, corpus, and cauda there are two forms of 47- and 43-kDa. Testis forms contain complex carbohydrate residues. Epididymal sperm forms are N-glycosylated. Then undergoes significant glycosylation in the testis and that the majority of these glycoconjugates are removed by the time sperm reach the caput epididymis. As to expression, highly expressed in testis, where it is localized in the acrosome of postmeiotic stages of spermiogenesis (round and elongating spermatids and in ejaculated spermatozoa) (at protein level). Poorly expressed in placenta and fetal lung.

The protein localises to the cytoplasmic vesicle. It is found in the secretory vesicle. Its subcellular location is the acrosome. Functionally, involved in fertilization ability of sperm. This chain is Sperm equatorial segment protein 1, found in Homo sapiens (Human).